Here is a 74-residue protein sequence, read N- to C-terminus: uncharacterized protein (74 aa).

This is an uncharacterized protein from Invertebrate iridescent virus 6 (IIV-6).